A 437-amino-acid chain; its full sequence is Selenocysteine lyase (437 aa).

An N-acetylmethionine modification is found at Met1. Residues 1–30 (MEAAGARNRDARSRAEKSPPESRKVYMDYN) form a disordered region. Positions 7-26 (RNRDARSRAEKSPPESRKVY) are enriched in basic and acidic residues. An N6-(pyridoxal phosphate)lysine modification is found at Lys252. Cys380 acts as the S-selanylcysteine intermediate in catalysis.

The protein belongs to the class-V pyridoxal-phosphate-dependent aminotransferase family. As to quaternary structure, homodimer. Requires pyridoxal 5'-phosphate as cofactor.

It is found in the cytoplasm. The protein resides in the cytosol. The catalysed reaction is L-selenocysteine + AH2 = hydrogenselenide + L-alanine + A + H(+). Its function is as follows. Catalyzes the decomposition of L-selenocysteine to L-alanine and elemental selenium. The sequence is that of Selenocysteine lyase (SCLY) from Bos taurus (Bovine).